The sequence spans 202 residues: Imidazoleglycerol-phosphate dehydratase (202 aa).

Belongs to the imidazoleglycerol-phosphate dehydratase family.

It localises to the cytoplasm. The catalysed reaction is D-erythro-1-(imidazol-4-yl)glycerol 3-phosphate = 3-(imidazol-4-yl)-2-oxopropyl phosphate + H2O. Its pathway is amino-acid biosynthesis; L-histidine biosynthesis; L-histidine from 5-phospho-alpha-D-ribose 1-diphosphate: step 6/9. This chain is Imidazoleglycerol-phosphate dehydratase, found in Brucella abortus (strain S19).